Consider the following 269-residue polypeptide: Regulatory protein RecX (269 aa).

The protein belongs to the RecX family.

It localises to the cytoplasm. Functionally, modulates RecA activity. This Geobacillus thermodenitrificans (strain NG80-2) protein is Regulatory protein RecX.